The sequence spans 827 residues: Probable beta-glucosidase H (827 aa).

The active site involves D223. In terms of domain architecture, PA14 spans R387 to V546. N-linked (GlcNAc...) asparagine glycosylation is found at N471, N594, N600, and N625.

This sequence belongs to the glycosyl hydrolase 3 family.

Its subcellular location is the secreted. The catalysed reaction is Hydrolysis of terminal, non-reducing beta-D-glucosyl residues with release of beta-D-glucose.. It functions in the pathway glycan metabolism; cellulose degradation. Functionally, beta-glucosidases are one of a number of cellulolytic enzymes involved in the degradation of cellulosic biomass. Catalyzes the last step releasing glucose from the inhibitory cellobiose. This chain is Probable beta-glucosidase H (bglH), found in Aspergillus flavus (strain ATCC 200026 / FGSC A1120 / IAM 13836 / NRRL 3357 / JCM 12722 / SRRC 167).